The primary structure comprises 319 residues: NADH-quinone oxidoreductase subunit H 1 (319 aa).

8 helical membrane passes run 1–21 (MIGLIITATISVTLIMVLLVV), 74–94 (FAYILAPAVAATPVLAGFGVI), 107–127 (VGVLFLIGMLGLTAYAVVLGA), 147–167 (LAYEVFLGLSLMGAVMLAGSL), 179–199 (VWFVVLQPLGAALFCIAGVAA), 238–258 (VLLVSALAVTLFFGGWLGPWL), 262–282 (IWFGLKTGVIAVVFVWLRATL), and 293–313 (FAWKIALPLSLANLLLTGIVV).

Belongs to the complex I subunit 1 family. In terms of assembly, NDH-1 is composed of 14 different subunits. Subunits NuoA, H, J, K, L, M, N constitute the membrane sector of the complex.

It is found in the cell inner membrane. It catalyses the reaction a quinone + NADH + 5 H(+)(in) = a quinol + NAD(+) + 4 H(+)(out). In terms of biological role, NDH-1 shuttles electrons from NADH, via FMN and iron-sulfur (Fe-S) centers, to quinones in the respiratory chain. The immediate electron acceptor for the enzyme in this species is believed to be ubiquinone. Couples the redox reaction to proton translocation (for every two electrons transferred, four hydrogen ions are translocated across the cytoplasmic membrane), and thus conserves the redox energy in a proton gradient. This subunit may bind ubiquinone. This Rhodopseudomonas palustris (strain BisB5) protein is NADH-quinone oxidoreductase subunit H 1.